The chain runs to 178 residues: Cytochrome b6-f complex subunit 4 (178 aa).

The next 3 helical transmembrane spans lie at 36-56 (LSYIFPVVILGTIACTIGLAV), 95-115 (LLGVLLMASVPAGSLTVPFLE), and 131-151 (TVSLIGTAVALWLGIGAALPI).

This sequence belongs to the cytochrome b family. PetD subfamily. As to quaternary structure, the 4 large subunits of the cytochrome b6-f complex are cytochrome b6, subunit IV (17 kDa polypeptide, petD), cytochrome f and the Rieske protein, while the 4 small subunits are petG, petL, petM and petN. The complex functions as a dimer.

It is found in the plastid. It localises to the chloroplast thylakoid membrane. Functionally, component of the cytochrome b6-f complex, which mediates electron transfer between photosystem II (PSII) and photosystem I (PSI), cyclic electron flow around PSI, and state transitions. This chain is Cytochrome b6-f complex subunit 4, found in Picea abies (Norway spruce).